The sequence spans 355 residues: MKLDDLLGEYYELEQQLADPAVHADQAQARTLAKRYSQLTPIVATYRELNRVESDIETAQELAAEDPSFADEAKQLAAQREELVQRLRTLLIPRDPNDDKDVILEVKAGEGGEESALFASDLVRMYLRYAERQGWKTEIISATHSDLGGYKDITIAIKNRGTVEPGQGVWHRLKFEGGVHRVQRVPVTESQGRIHTSAVGVLVLPEAEEIEVEINESDLRIDVYRSSGPGGQSVNTTDSAVRITHLPTGIVVSCQNEKSQLQNKEQALRVLRARLLAEAQAAAEAEAAAERRSQVRTVDRSERVRTYNFPENRISDHRVGYKAYNLDQVLDGELDGVIQALVDADTKERLEAAQQ.

Gln-232 carries the post-translational modification N5-methylglutamine.

The protein belongs to the prokaryotic/mitochondrial release factor family. In terms of processing, methylated by PrmC. Methylation increases the termination efficiency of RF1.

The protein localises to the cytoplasm. Peptide chain release factor 1 directs the termination of translation in response to the peptide chain termination codons UAG and UAA. This is Peptide chain release factor 1 from Thermobifida fusca (strain YX).